The chain runs to 203 residues: HTH-type transcriptional regulator BetI (203 aa).

Positions 8–68 constitute an HTH tetR-type domain; it reads PVRRKALVDA…ATIRSLLGKL (61 aa). The segment at residues 31-50 is a DNA-binding region (H-T-H motif); sequence TMSEIARTAGVSPALAHHYF.

It participates in amine and polyamine biosynthesis; betaine biosynthesis via choline pathway [regulation]. In terms of biological role, repressor involved in the biosynthesis of the osmoprotectant glycine betaine. It represses transcription of the choline transporter BetT and the genes of BetAB involved in the synthesis of glycine betaine. The polypeptide is HTH-type transcriptional regulator BetI (Rhizobium meliloti (strain 1021) (Ensifer meliloti)).